The chain runs to 423 residues: Gamma-glutamyl phosphate reductase (423 aa).

Belongs to the gamma-glutamyl phosphate reductase family.

It is found in the cytoplasm. The enzyme catalyses L-glutamate 5-semialdehyde + phosphate + NADP(+) = L-glutamyl 5-phosphate + NADPH + H(+). It participates in amino-acid biosynthesis; L-proline biosynthesis; L-glutamate 5-semialdehyde from L-glutamate: step 2/2. In terms of biological role, catalyzes the NADPH-dependent reduction of L-glutamate 5-phosphate into L-glutamate 5-semialdehyde and phosphate. The product spontaneously undergoes cyclization to form 1-pyrroline-5-carboxylate. The polypeptide is Gamma-glutamyl phosphate reductase (Paracoccus denitrificans (strain Pd 1222)).